Consider the following 72-residue polypeptide: Translation initiation factor IF-1 (72 aa).

The 72-residue stretch at 1 to 72 (MSKDDSIEFE…TKGRITYRMK (72 aa)) folds into the S1-like domain.

Belongs to the IF-1 family. Component of the 30S ribosomal translation pre-initiation complex which assembles on the 30S ribosome in the order IF-2 and IF-3, IF-1 and N-formylmethionyl-tRNA(fMet); mRNA recruitment can occur at any time during PIC assembly.

The protein resides in the cytoplasm. Functionally, one of the essential components for the initiation of protein synthesis. Stabilizes the binding of IF-2 and IF-3 on the 30S subunit to which N-formylmethionyl-tRNA(fMet) subsequently binds. Helps modulate mRNA selection, yielding the 30S pre-initiation complex (PIC). Upon addition of the 50S ribosomal subunit IF-1, IF-2 and IF-3 are released leaving the mature 70S translation initiation complex. The protein is Translation initiation factor IF-1 of Xanthomonas campestris pv. campestris (strain 8004).